A 494-amino-acid polypeptide reads, in one-letter code: MIKFALALTLCLAGASLSLAQHNPQWWGNRNTIVHLFEWKWSDIAEECETFLAPRGFAGVQVSPVNENIISAGRPWWERYQPISYKLTTRSGNEEEFADMVRRCNDVGIRIYVDVLLNHMSGDFDGVAVGTAGTEAEPSKKSFPGVPYSAQDFHPSCEITDWNDRFQVQQCELVGLKDLNQHSDYVRSKLIEFLDHLIELGVAGFRVDAAKHMAAEDLEYIYGSLSNLNIEHGFPHNARPFIFQEVIDHGHETVSREEYNGLGAVTEFRFSEEIGRAFRGNNALKWLQSWGTDWGFLSSEQALTFVDNHDNQRDMGSVLNYKSPRQYKMATAFHLAYPYGISRVMSSFAFDDHDTPPPQDAQENIISPEFDEDGACVNGWICEHRWRQIYAMVGFKNAVRDTELSAWWDNGDNQISFCRGNKGFLAVNNNQYDLSQELNTCLPAGEYCDVISGSLIDGACTGKSVHVNEHGYGYIHIGSDDFDGVLALHVNAKV.

A signal peptide spans 1 to 20 (MIKFALALTLCLAGASLSLA). A Pyrrolidone carboxylic acid modification is found at Q21. C48 and C104 form a disulfide bridge. Ca(2+) contacts are provided by N118, Q169, and D178. Residues C157 and C171 are joined by a disulfide bond. R206 contributes to the chloride binding site. Residue D208 is the Nucleophile of the active site. H212 is a binding site for Ca(2+). Residue E245 is the Proton donor of the active site. Chloride contacts are provided by N308 and R343. 3 disulfide bridges follow: C376–C382, C418–C441, and C448–C460.

It belongs to the glycosyl hydrolase 13 family. In terms of assembly, monomer. Requires Ca(2+) as cofactor. Chloride serves as cofactor.

It is found in the secreted. It carries out the reaction Endohydrolysis of (1-&gt;4)-alpha-D-glucosidic linkages in polysaccharides containing three or more (1-&gt;4)-alpha-linked D-glucose units.. The protein is Alpha-amylase-related protein (Amyrel) of Drosophila lini (Fruit fly).